A 429-amino-acid polypeptide reads, in one-letter code: Enolase (429 aa).

Position 163 (Gln163) interacts with (2R)-2-phosphoglycerate. Glu205 functions as the Proton donor in the catalytic mechanism. Mg(2+) is bound by residues Asp242, Glu286, and Asp313. (2R)-2-phosphoglycerate-binding residues include Lys338, Arg367, Ser368, and Lys389. The Proton acceptor role is filled by Lys338.

The protein belongs to the enolase family. It depends on Mg(2+) as a cofactor.

It is found in the cytoplasm. It localises to the secreted. The protein resides in the cell surface. The enzyme catalyses (2R)-2-phosphoglycerate = phosphoenolpyruvate + H2O. The protein operates within carbohydrate degradation; glycolysis; pyruvate from D-glyceraldehyde 3-phosphate: step 4/5. Functionally, catalyzes the reversible conversion of 2-phosphoglycerate (2-PG) into phosphoenolpyruvate (PEP). It is essential for the degradation of carbohydrates via glycolysis. The chain is Enolase from Geotalea uraniireducens (strain Rf4) (Geobacter uraniireducens).